We begin with the raw amino-acid sequence, 634 residues long: Zinc finger and BTB domain-containing protein 22 (634 aa).

The 65-residue stretch at 57 to 121 folds into the BTB domain; the sequence is CDVSIRVQGR…AYTGRLSMAA (65 aa). 2 disordered regions span residues 167-247 and 308-461; these read TVPG…APVV and APTP…GTSV. Low complexity predominate over residues 180–198; the sequence is TVAPATMGSARSHASSRAS. A compositionally biased stretch (polar residues) spans 199–209; it reads ENQSPSSSNYF. Ser202 bears the Phosphoserine mark. Residues 217-229 show a composition bias toward low complexity; the sequence is FSSSSQEAFAASA. Positions 317-340 are enriched in acidic residues; the sequence is PDLEEEEEEEDLVLTCEDDEDEEL. The segment covering 452 to 461 has biased composition (low complexity); it reads GAVTVGGTSV. The segment at 486-507 adopts a C2H2-type 1; atypical zinc-finger fold; that stretch reads FLCHCGKAFSHKSMRDRHVNMH. C2H2-type zinc fingers lie at residues 513–535 and 541–562; these read FDCPVCNKKFKMKHHLTEHMKTH and YECGVCAKKFMWRDSFMRHRGH. The disordered stretch occupies residues 568–634; that stretch reads RLGGVGAVPG…MGFGGGGGAN (67 aa). Over residues 608–618 the composition is skewed to low complexity; that stretch reads PPSSRRVWSPP.

Belongs to the krueppel C2H2-type zinc-finger protein family.

It localises to the nucleus. Functionally, may be involved in transcriptional regulation. The sequence is that of Zinc finger and BTB domain-containing protein 22 (ZBTB22) from Homo sapiens (Human).